A 416-amino-acid chain; its full sequence is Gamma-glutamyl phosphate reductase (416 aa).

It belongs to the gamma-glutamyl phosphate reductase family.

It is found in the cytoplasm. The enzyme catalyses L-glutamate 5-semialdehyde + phosphate + NADP(+) = L-glutamyl 5-phosphate + NADPH + H(+). The protein operates within amino-acid biosynthesis; L-proline biosynthesis; L-glutamate 5-semialdehyde from L-glutamate: step 2/2. Catalyzes the NADPH-dependent reduction of L-glutamate 5-phosphate into L-glutamate 5-semialdehyde and phosphate. The product spontaneously undergoes cyclization to form 1-pyrroline-5-carboxylate. The chain is Gamma-glutamyl phosphate reductase from Streptococcus pyogenes serotype M6 (strain ATCC BAA-946 / MGAS10394).